A 249-amino-acid chain; its full sequence is Ditrans,polycis-undecaprenyl-diphosphate synthase ((2E,6E)-farnesyl-diphosphate specific) (249 aa).

D26 is a catalytic residue. D26 is a binding site for Mg(2+). Substrate is bound by residues 27 to 30 (GNGR), W31, R39, H43, and 71 to 73 (SRE). The active-site Proton acceptor is the N74. Residues W75, R77, R194, and 200-202 (RIS) contribute to the substrate site. Mg(2+) is bound at residue E213.

This sequence belongs to the UPP synthase family. Homodimer. Mg(2+) is required as a cofactor.

The enzyme catalyses 8 isopentenyl diphosphate + (2E,6E)-farnesyl diphosphate = di-trans,octa-cis-undecaprenyl diphosphate + 8 diphosphate. Its function is as follows. Catalyzes the sequential condensation of isopentenyl diphosphate (IPP) with (2E,6E)-farnesyl diphosphate (E,E-FPP) to yield (2Z,6Z,10Z,14Z,18Z,22Z,26Z,30Z,34E,38E)-undecaprenyl diphosphate (di-trans,octa-cis-UPP). UPP is the precursor of glycosyl carrier lipid in the biosynthesis of bacterial cell wall polysaccharide components such as peptidoglycan and lipopolysaccharide. This Buchnera aphidicola subsp. Schizaphis graminum (strain Sg) protein is Ditrans,polycis-undecaprenyl-diphosphate synthase ((2E,6E)-farnesyl-diphosphate specific).